Consider the following 360-residue polypeptide: Zinc finger protein ztf-2 (360 aa).

Positions 19 to 41 are disordered; the sequence is LSSPEKEHRRKRRRGEVANPSNT. 3 consecutive C2H2-type zinc fingers follow at residues 87 to 109, 115 to 138, and 180 to 203; these read RTCS…KRVH, FKCR…AKTH, and YRCQ…SHLH. Positions 248–260 are enriched in low complexity; that stretch reads PLSPCRSESSSDS. Residues 248–272 form a disordered region; the sequence is PLSPCRSESSSDSGIQTDPEEEASI.

As to expression, expressed in pharyngeal epithelium/arcade, which connects the pharynx to the mouth.

In terms of biological role, transcription factor. Represses gene expression, probably via binding to DNA consensus sequence 5'-[AT][CT]TTCC[AC][AG]-3' in promoter regions. May play a role in pharynx morphogenesis. This Caenorhabditis elegans protein is Zinc finger protein ztf-2.